Here is a 754-residue protein sequence, read N- to C-terminus: Cytosolic neutral trehalase (754 aa).

Over residues 1-10 the composition is skewed to polar residues; the sequence is MDGKVNNNPP. Disordered stretches follow at residues 1–47 and 54–73; these read MDGK…LSKN and TFSV…YTSP. Ca(2+)-binding residues include aspartate 117, aspartate 119, asparagine 121, glutamine 123, and aspartate 128. Substrate is bound by residues arginine 305, 312–313, asparagine 349, 358–360, glutamate 427, arginine 476, and glycine 479; these read WD and RSQ. Catalysis depends on proton donor/acceptor residues aspartate 481 and glutamate 676.

It belongs to the glycosyl hydrolase 37 family. The cofactor is Ca(2+).

It localises to the cytoplasm. The catalysed reaction is alpha,alpha-trehalose + H2O = alpha-D-glucose + beta-D-glucose. Its pathway is carbohydrate degradation. Hydrolyzes intracellular trehalose to glucose. The disaccharide trehalose serves as a storage molecule for energy and carbohydrates that is mobilized during nutrient stress. This chain is Cytosolic neutral trehalase, found in Kluyveromyces lactis (strain ATCC 8585 / CBS 2359 / DSM 70799 / NBRC 1267 / NRRL Y-1140 / WM37) (Yeast).